The following is a 289-amino-acid chain: Serine/threonine-protein phosphatase Pgam5, mitochondrial (289 aa).

Residues 7-23 form a helical membrane-spanning segment; it reads FACGTGAGLAAYYLQRL.

This sequence belongs to the phosphoglycerate mutase family. BPG-dependent PGAM subfamily. Interacts with Pk92B/ASK1.

Its subcellular location is the mitochondrion outer membrane. The catalysed reaction is O-phospho-L-seryl-[protein] + H2O = L-seryl-[protein] + phosphate. The enzyme catalyses O-phospho-L-threonyl-[protein] + H2O = L-threonyl-[protein] + phosphate. Displays phosphatase activity for serine/threonine residues, and dephosphorylates and activates Pk92B kinase. Has apparently no phosphoglycerate mutase activity. This is Serine/threonine-protein phosphatase Pgam5, mitochondrial from Drosophila sechellia (Fruit fly).